The sequence spans 847 residues: B-cell receptor CD22 (847 aa).

Positions 1–19 (MHLLGPWLLLLVLEYLAFS) are cleaved as a signal peptide. An Ig-like V-type domain is found at 20–138 (DSSKWVFEHP…MERIHLNVSE (119 aa)). Over 20-687 (DSSKWVFEHP…YYSPETIGRR (668 aa)) the chain is Extracellular. Disulfide bonds link cysteine 39/cysteine 167, cysteine 44/cysteine 102, and cysteine 161/cysteine 219. 3 N-linked (GlcNAc...) asparagine glycosylation sites follow: asparagine 67, asparagine 101, and asparagine 112. N-acetylneuraminate is bound at residue arginine 120. N-linked (GlcNAc...) asparagine glycosylation is found at asparagine 135, asparagine 164, and asparagine 231. 6 consecutive Ig-like C2-type domains span residues 143 to 235 (PHIQ…DTVQ), 242 to 326 (PKLE…VFLQ), 331 to 416 (PEPS…LDVQ), 419 to 500 (PKKV…VALN), 505 to 582 (PRDV…QTAS), and 593 to 676 (PRRL…STLT). 4 disulfides stabilise this stretch: cysteine 265–cysteine 309, cysteine 353–cysteine 396, cysteine 442–cysteine 484, and cysteine 529–cysteine 571. 3 N-linked (GlcNAc...) asparagine glycosylation sites follow: asparagine 363, asparagine 445, and asparagine 479. N-linked (GlcNAc...) asparagine glycans are attached at residues asparagine 574 and asparagine 634. Cysteine 616 and cysteine 659 form a disulfide bridge. A helical membrane pass occupies residues 688-706 (VAVGLGSCLAILILAICGL). At 707 to 847 (KLQRRWKRTQ…ENVDYVILKH (141 aa)) the chain is on the cytoplasmic side. Phosphoserine occurs at positions 725, 726, and 729. 2 consecutive short sequence motifs (ITIM motif) follow at residues 760-765 (ISYTTL) and 794-799 (VTYSAL). Tyrosine 762 carries the post-translational modification Phosphotyrosine. Phosphotyrosine occurs at positions 807, 822, and 842. 2 consecutive short sequence motifs (ITIM motif) follow at residues 820–825 (IHYSEL) and 840–845 (VDYVIL).

Belongs to the immunoglobulin superfamily. SIGLEC (sialic acid binding Ig-like lectin) family. As to quaternary structure, predominantly monomer of isoform CD22-beta. Also found as heterodimer of isoform CD22-beta and a shorter isoform. Interacts with PTPN6/SHP-1, LYN, SYK, PIK3R1/PIK3R2 and PLCG1 upon phosphorylation. Interacts with GRB2, INPP5D and SHC1 upon phosphorylation. May form a complex with INPP5D/SHIP, GRB2 and SHC1. Phosphorylation of Tyr-762, Tyr-807 and Tyr-822 are involved in binding to SYK, GRB2 and SYK, respectively. Phosphorylation of Tyr-842 is involved in binding to SYK, PLCG2 and PIK3R1/PIK3R2. Post-translationally, phosphorylated on tyrosine residues by LYN. As to expression, B-lymphocytes.

The protein localises to the cell membrane. In terms of biological role, most highly expressed siglec (sialic acid-binding immunoglobulin-like lectin) on B-cells that plays a role in various aspects of B-cell biology including differentiation, antigen presentation, and trafficking to bone marrow. Binds to alpha 2,6-linked sialic acid residues of surface molecules such as CD22 itself, CD45 and IgM in a cis configuration. Can also bind to ligands on other cells as an adhesion molecule in a trans configuration. Acts as an inhibitory coreceptor on the surface of B-cells and inhibits B-cell receptor induced signaling, characterized by inhibition of the calcium mobilization and cellular activation. Mechanistically, the immunoreceptor tyrosine-based inhibitory motif domain is phosphorylated by the Src kinase LYN, which in turn leads to the recruitment of the protein tyrosine phosphatase 1/PTPN6, leading to the negative regulation of BCR signaling. If this negative signaling from is of sufficient strength, apoptosis of the B-cell can be induced. This Homo sapiens (Human) protein is B-cell receptor CD22.